Reading from the N-terminus, the 493-residue chain is Angiopoietin-related protein 2 (493 aa).

An N-terminal signal peptide occupies residues 1 to 19 (MRPLCMTYWWLGLLATVGA). Coiled coils occupy residues 77 to 115 (EVHL…VDGG) and 152 to 202 (ALEL…QLEE). N-linked (GlcNAc...) asparagine glycans are attached at residues Asn164 and Asn192. A Fibrinogen C-terminal domain is found at 269–489 (DKPSGPWRDC…KVVMMIRPNP (221 aa)). Cystine bridges form between Cys278–Cys307 and Cys430–Cys443.

As to expression, widely expressed in heart, tongue, lung and skeletal muscle. Also found in lower levels in kidney, epididymis and testis.

Its subcellular location is the secreted. In terms of biological role, induces sprouting in endothelial cells through an autocrine and paracrine action. The polypeptide is Angiopoietin-related protein 2 (Angptl2) (Mus musculus (Mouse)).